A 485-amino-acid chain; its full sequence is Ribulose bisphosphate carboxylase large chain (485 aa).

Residues N124 and T174 each contribute to the substrate site. K176 functions as the Proton acceptor in the catalytic mechanism. K178 is a substrate binding site. Mg(2+)-binding residues include K202, D204, and E205. K202 is subject to N6-carboxylysine. The active-site Proton acceptor is H294. Positions 295, 327, and 379 each coordinate substrate.

Belongs to the RuBisCO large chain family. Type I subfamily. Heterohexadecamer of 8 large chains and 8 small chains. The cofactor is Mg(2+).

It catalyses the reaction 2 (2R)-3-phosphoglycerate + 2 H(+) = D-ribulose 1,5-bisphosphate + CO2 + H2O. It carries out the reaction D-ribulose 1,5-bisphosphate + O2 = 2-phosphoglycolate + (2R)-3-phosphoglycerate + 2 H(+). In terms of biological role, ruBisCO catalyzes two reactions: the carboxylation of D-ribulose 1,5-bisphosphate, the primary event in carbon dioxide fixation, as well as the oxidative fragmentation of the pentose substrate. Both reactions occur simultaneously and in competition at the same active site. The protein is Ribulose bisphosphate carboxylase large chain of Rhodopseudomonas palustris (strain TIE-1).